A 187-amino-acid chain; its full sequence is GTP cyclohydrolase 1 (187 aa).

C76, H79, and C148 together coordinate Zn(2+).

This sequence belongs to the GTP cyclohydrolase I family. Toroid-shaped homodecamer, composed of two pentamers of five dimers.

The enzyme catalyses GTP + H2O = 7,8-dihydroneopterin 3'-triphosphate + formate + H(+). It functions in the pathway cofactor biosynthesis; 7,8-dihydroneopterin triphosphate biosynthesis; 7,8-dihydroneopterin triphosphate from GTP: step 1/1. The protein is GTP cyclohydrolase 1 of Streptococcus thermophilus (strain CNRZ 1066).